The following is an 807-amino-acid chain: Glycerol-3-phosphate acyltransferase (807 aa).

Positions 308-313 (CHRSHM) match the HXXXXD motif motif.

This sequence belongs to the GPAT/DAPAT family.

It is found in the cell inner membrane. The enzyme catalyses sn-glycerol 3-phosphate + an acyl-CoA = a 1-acyl-sn-glycero-3-phosphate + CoA. It participates in phospholipid metabolism; CDP-diacylglycerol biosynthesis; CDP-diacylglycerol from sn-glycerol 3-phosphate: step 1/3. This Shewanella halifaxensis (strain HAW-EB4) protein is Glycerol-3-phosphate acyltransferase.